The primary structure comprises 417 residues: Serine hydroxymethyltransferase (417 aa).

Residues leucine 112 and 116–118 (GHL) contribute to the (6S)-5,6,7,8-tetrahydrofolate site. Lysine 221 is modified (N6-(pyridoxal phosphate)lysine). (6S)-5,6,7,8-tetrahydrofolate is bound at residue glutamate 247.

The protein belongs to the SHMT family. Homodimer. It depends on pyridoxal 5'-phosphate as a cofactor.

The protein resides in the cytoplasm. The enzyme catalyses (6R)-5,10-methylene-5,6,7,8-tetrahydrofolate + glycine + H2O = (6S)-5,6,7,8-tetrahydrofolate + L-serine. Its pathway is one-carbon metabolism; tetrahydrofolate interconversion. The protein operates within amino-acid biosynthesis; glycine biosynthesis; glycine from L-serine: step 1/1. Catalyzes the reversible interconversion of serine and glycine with tetrahydrofolate (THF) serving as the one-carbon carrier. This reaction serves as the major source of one-carbon groups required for the biosynthesis of purines, thymidylate, methionine, and other important biomolecules. Also exhibits THF-independent aldolase activity toward beta-hydroxyamino acids, producing glycine and aldehydes, via a retro-aldol mechanism. This Borreliella burgdorferi (strain ATCC 35210 / DSM 4680 / CIP 102532 / B31) (Borrelia burgdorferi) protein is Serine hydroxymethyltransferase.